The primary structure comprises 125 residues: Large ribosomal subunit protein bL12 (125 aa).

This sequence belongs to the bacterial ribosomal protein bL12 family. In terms of assembly, homodimer. Part of the ribosomal stalk of the 50S ribosomal subunit. Forms a multimeric L10(L12)X complex, where L10 forms an elongated spine to which 2 to 4 L12 dimers bind in a sequential fashion. Binds GTP-bound translation factors.

Forms part of the ribosomal stalk which helps the ribosome interact with GTP-bound translation factors. Is thus essential for accurate translation. The sequence is that of Large ribosomal subunit protein bL12 from Azoarcus sp. (strain BH72).